The primary structure comprises 173 residues: MIEFLRRIAAHRLAWGLLAASALFLELSALFFQYVLGLHPCVMCVYERLAILGVLSAGLLGMVAPEKWYLRWSALLLWGYSAFRGLQLALKHVDYQMNPSPFNVCSPFADFPSWAPLDQWLPWLFFPDGDCSEISWQFLSFSMPQWLVAIFAAYLLVFVVVTIGNLVKGRCCS.

Residues 1-14 are Cytoplasmic-facing; that stretch reads MIEFLRRIAAHRLA. The helical transmembrane segment at 15-31 threads the bilayer; it reads WGLLAASALFLELSALF. The Periplasmic portion of the chain corresponds to 32–49; that stretch reads FQYVLGLHPCVMCVYERL. A disulfide bridge links Cys41 with Cys44. Residues 50 to 65 form a helical membrane-spanning segment; that stretch reads AILGVLSAGLLGMVAP. At 66–72 the chain is on the cytoplasmic side; that stretch reads EKWYLRW. A helical membrane pass occupies residues 73 to 90; the sequence is SALLLWGYSAFRGLQLAL. The Periplasmic segment spans residues 91 to 145; sequence KHVDYQMNPSPFNVCSPFADFPSWAPLDQWLPWLFFPDGDCSEISWQFLSFSMPQ. Cys105 and Cys131 form a disulfide bridge. The helical transmembrane segment at 146 to 164 threads the bilayer; it reads WLVAIFAAYLLVFVVVTIG. Topologically, residues 165–173 are cytoplasmic; sequence NLVKGRCCS.

The protein belongs to the DsbB family.

The protein resides in the cell inner membrane. Its function is as follows. Required for disulfide bond formation in some periplasmic proteins. Acts by oxidizing the DsbA protein. This chain is Disulfide bond formation protein B, found in Aeromonas salmonicida (strain A449).